The primary structure comprises 1516 residues: MSSNVLPMYASTPSRAFAHSKLSSQLRAALADNSPAAPISPAPSGSALSLDESSGISDRDVHSSQEQTAHLSEVDVKSIHSSDSEDEPAQNPLPEVPANCGPPTIPLNVLLDFAIQHVYHEITVLAELMQRKTNDQGEQERKMSLVHFAHATRSQFLKLVALVKWIRISKRMDVCYSIDYLLDLQSQYFIDTADRLVAMTRGDLELARLPEYHIAPAIDVLVLGTYNRMPSKIKEAFIPPAKITPREQKLVTSRLNQLIESRLSRLSSGIPPNIKEIHINNGLATLLVPGEFEIKITLLGETEMTKWTLLNIKILVEDYELGMGLPLVHPLQLNQLHGVLQSRMNVSLNPIKEAFSFLHSFCVSLQLDVLFCQTSRLAAGRLRDNITIEKYDPKERVLVVGYWVKRSKSRRLTVGQVKCDAQYRVQIYEDPNDKLGGLKVRHFPHAPQLGRLDSGAGMLSIDRLLSETYVVRCKERLMRLRRILEAAEPRLEVKMTGISAPSLSLALLPDTSSKDEMMTVSVNSFCGKVLCNVHILSAEHEDVLAFGKALYSSQCSAHTIQMYLRKLRVALVIERYRRSVKALPVREVQEAELLPFAKECLGDAPAQRIILQFLRSEDYYLLVTFSPDEKAVVKTHIQLLEVVGDRAQFIQLEDDEMNGMHVKEAINQGTMRFSPSHKTSLQEECSREQRLAFAVATVEDRITYMYLAAELMKKGIGVDVRKDSAHVPGGLALHITDVKNVVPFEASEFFECCIRCCLRLDNRNRYTFQFEMCFENIPLVRDVPHGLPHRRDGEPKDRTSKDATWLQELNHINQSSPEKLVELIIHRLMRYLYMYKVVHQFSLAYEKHFKNYCNIEAYTFHKLVVSYGDNRDMLMILAFNVKSQAPGSSEDFFFLNFGQSMPHRQFNSTEIDWHQKPRWNPHSMMSQLMRDDLKETNDLVFTMHFLCETIRPLVAIGNFSRIRFQSQKSLSQLIGPDVHFPFRLKYHLYALDQTTLRLMQGNVILEIKLLEGCKIAVRDVSRYRPRCAGLFQLFSNIDSETTAIMNDEIAIPQSDNPQTAGPTMWTPEQFMDSLDERPEEIDPRMAITSQPILMSHDTIIKACDFKDTEGRITCPLDEYLCSISYLQRALLTLERMSPRATLNKNSSSNLSCGFVTIIDAKPDFIRFRASQMNGDGVNATSMVHYKIYLCPVAMTLKIRIEFEEGTNSAATADNLKTLTTYFEKVVFPCGDEYALQSYICLTRLTSFEATQSIANLMNVQMEHPPTSKCCVQLSLTYNNTSTKKLAPATKVDQPLQNIIFNVIVSQSRTSESFSVLRFIYRIKENFVVVPSANEKNKQMADEVNAETKTSGGNPIWNLVRLVMDRFNSGDWNPGNRDEPIISSVAPPTYVNPGSVAGPSSVAAPGSVSIQQPGSVLQPGSMMGPQSVNALQYGMHRQPMGGPQSMQMNPSSVGQPGSVGGPGSHQQHMMNPGSVGPGSVGGPGSVNPGSVGYPQWNPPSVGQSYHHPLHHQQYPPQ.

Disordered stretches follow at residues 22–98 (LSSQ…EVPA) and 1434–1516 (MHRQ…YPPQ). A compositionally biased stretch (low complexity) spans 34 to 47 (SPAAPISPAPSGSA). The span at 72 to 83 (SEVDVKSIHSSD) shows a compositional bias: basic and acidic residues. Over residues 1463 to 1473 (SHQQHMMNPGS) the composition is skewed to low complexity. A compositionally biased stretch (gly residues) spans 1474-1483 (VGPGSVGGPG). Residues 1502 to 1516 (QSYHHPLHHQQYPPQ) show a composition bias toward low complexity.

It belongs to the Mediator complex subunit 14 family. Component of the Mediator complex.

It localises to the nucleus. Its function is as follows. Component of the Mediator complex, a coactivator involved in the regulated transcription of nearly all RNA polymerase II-dependent genes. Mediator functions as a bridge to convey information from gene-specific regulatory proteins to the basal RNA polymerase II transcription machinery. Mediator is recruited to promoters by direct interactions with regulatory proteins and serves as a scaffold for the assembly of a functional preinitiation complex with RNA polymerase II and the general transcription factors. Required for transcription in the embryo and for phosphorylation of the RNA polymerase II C-terminal domain repeat. The sequence is that of Mediator of RNA polymerase II transcription subunit 14 (rgr-1) from Caenorhabditis elegans.